The sequence spans 330 residues: Polyprenal reductase (330 aa).

Residues M1–R16 lie on the Cytoplasmic side of the membrane. The helical transmembrane segment at T17–A37 threads the bilayer. Over R38 to Y80 the chain is Lumenal. A helical transmembrane segment spans residues V81 to G101. At A102–M132 the chain is on the cytoplasmic side. The chain crosses the membrane as a helical span at residues P133–L153. Residues R154 to A169 are Lumenal-facing. A helical membrane pass occupies residues I170–L190. At S191 to N206 the chain is on the cytoplasmic side. Residues L207–A227 form a helical membrane-spanning segment. Topologically, residues H228–S277 are lumenal. Residues M278–S298 traverse the membrane as a helical segment. Topologically, residues S299 to F330 are cytoplasmic.

This sequence belongs to the steroid 5-alpha reductase family. Polyprenal reductase subfamily.

The protein resides in the endoplasmic reticulum membrane. The catalysed reaction is a di-trans,poly-cis-dolichal + NADP(+) = a di-trans,poly-cis-polyprenal + NADPH + H(+). It carries out the reaction a 3-oxo-5alpha-steroid + NADP(+) = a 3-oxo-Delta(4)-steroid + NADPH + H(+). The enzyme catalyses androst-4-ene-3,17-dione + NADPH + H(+) = 5alpha-androstan-3,17-dione + NADP(+). It catalyses the reaction 17beta-hydroxy-5alpha-androstan-3-one + NADP(+) = testosterone + NADPH + H(+). It functions in the pathway protein modification; protein glycosylation. Its function is as follows. Plays a key role in early steps of protein N-linked glycosylation by being involved in the conversion of polyprenol into dolichol. Acts as a polyprenal reductase that mediates the reduction of polyprenal into dolichal in a NADP-dependent mechanism. Dolichols are required for the synthesis of dolichol-linked monosaccharides and the oligosaccharide precursor used for N-glycosylation. Also able to convert testosterone (T) into 5-alpha-dihydrotestosterone (DHT). The chain is Polyprenal reductase from Mus musculus (Mouse).